The following is a 445-amino-acid chain: uncharacterized protein (445 aa).

8 helical membrane passes run 16-36 (IVSL…AFLI), 52-72 (LLAS…GYLL), 98-118 (VHSL…AGGC), 168-188 (GLMF…LGIV), 219-239 (ASAL…VWLI), 243-263 (GWSV…GALG), 283-303 (LIAA…NEGS), and 366-386 (AAYP…VPLV). A disordered region spans residues 417-445 (AWPNGPRRPGPPGQPRRVRQGGTAITPPT).

The protein belongs to the major facilitator superfamily.

The protein localises to the cell membrane. This is an uncharacterized protein from Mycobacterium tuberculosis (strain CDC 1551 / Oshkosh).